The chain runs to 34 residues: Delta-conotoxin AtVIA (34 aa).

A propeptide spanning residues 1–4 is cleaved from the precursor; that stretch reads LSKK. Glutamine 5 is subject to Pyrrolidone carboxylic acid. Cystine bridges form between cysteine 6–cysteine 23, cysteine 13–cysteine 27, and cysteine 22–cysteine 31.

As to expression, expressed by the venom duct.

It localises to the secreted. Its function is as follows. Probable toxin from a worm-hunter cone snail. Shows an excitatory activity on a majority of mouse lumbar dorsal root ganglion (DRG) neurons. Very probably inhibits the inactivation of voltage-gated sodium channels (Nav). This is Delta-conotoxin AtVIA from Conus ateralbus (Cone snail).